We begin with the raw amino-acid sequence, 199 residues long: Glycerol-3-phosphate acyltransferase (199 aa).

The next 5 membrane-spanning stretches (helical) occupy residues 4-24 (FALF…AILI), 56-76 (LAVL…GYYL), 80-100 (QFEL…PIFF), 115-135 (IAPI…FVFL), and 154-176 (YVWW…LIYR).

It belongs to the PlsY family. In terms of assembly, probably interacts with PlsX.

It is found in the cell inner membrane. It carries out the reaction an acyl phosphate + sn-glycerol 3-phosphate = a 1-acyl-sn-glycero-3-phosphate + phosphate. Its pathway is lipid metabolism; phospholipid metabolism. In terms of biological role, catalyzes the transfer of an acyl group from acyl-phosphate (acyl-PO(4)) to glycerol-3-phosphate (G3P) to form lysophosphatidic acid (LPA). This enzyme utilizes acyl-phosphate as fatty acyl donor, but not acyl-CoA or acyl-ACP. In Haemophilus influenzae (strain PittGG), this protein is Glycerol-3-phosphate acyltransferase.